A 674-amino-acid polypeptide reads, in one-letter code: DNA ligase (674 aa).

NAD(+) contacts are provided by residues D35 to D39, S84 to L85, and E116. Residue K118 is the N6-AMP-lysine intermediate of the active site. 4 residues coordinate NAD(+): R139, E176, K293, and K317. 4 residues coordinate Zn(2+): C411, C414, C429, and C435. One can recognise a BRCT domain in the interval D593–V674.

It belongs to the NAD-dependent DNA ligase family. LigA subfamily. Mg(2+) serves as cofactor. The cofactor is Mn(2+).

It carries out the reaction NAD(+) + (deoxyribonucleotide)n-3'-hydroxyl + 5'-phospho-(deoxyribonucleotide)m = (deoxyribonucleotide)n+m + AMP + beta-nicotinamide D-nucleotide.. Its function is as follows. DNA ligase that catalyzes the formation of phosphodiester linkages between 5'-phosphoryl and 3'-hydroxyl groups in double-stranded DNA using NAD as a coenzyme and as the energy source for the reaction. It is essential for DNA replication and repair of damaged DNA. This chain is DNA ligase, found in Saccharophagus degradans (strain 2-40 / ATCC 43961 / DSM 17024).